Reading from the N-terminus, the 490-residue chain is Cardiolipin synthase 1 (490 aa).

2 helical membrane passes run 9–29 and 42–62; these read ILTILLVVGFITNVVLAFVII and WAWLFVLFVLPVIGFILYLFL. PLD phosphodiesterase domains are found at residues 225–252 and 403–430; these read MNNRNHRKIIIIDGQIGYVGGFNVGDDY and QNGFIHSKILMIDDEISSIGSANMDFRS. Active-site residues include H230, K232, D237, H408, K410, and D415.

This sequence belongs to the phospholipase D family. Cardiolipin synthase subfamily.

Its subcellular location is the cell membrane. It catalyses the reaction 2 a 1,2-diacyl-sn-glycero-3-phospho-(1'-sn-glycerol) = a cardiolipin + glycerol. Catalyzes the reversible phosphatidyl group transfer from one phosphatidylglycerol molecule to another to form cardiolipin (CL) (diphosphatidylglycerol) and glycerol. The polypeptide is Cardiolipin synthase 1 (cls1) (Staphylococcus epidermidis (strain ATCC 12228 / FDA PCI 1200)).